Consider the following 498-residue polypeptide: Fascin-3 (498 aa).

The protein belongs to the fascin family. Expressed in testis.

Its subcellular location is the cytoplasm. The protein localises to the cytoskeleton. In terms of biological role, acts as an actin bundling protein. This chain is Fascin-3 (FSCN3), found in Homo sapiens (Human).